The sequence spans 702 residues: Elongation factor G (702 aa).

The tr-type G domain occupies 9–292 (DRTRNIGIMA…AVVDYLPSPL (284 aa)). Residues 18–25 (AHIDAGKT), 91–95 (DTPGH), and 145–148 (NKMD) contribute to the GTP site.

Belongs to the TRAFAC class translation factor GTPase superfamily. Classic translation factor GTPase family. EF-G/EF-2 subfamily.

Its subcellular location is the cytoplasm. Catalyzes the GTP-dependent ribosomal translocation step during translation elongation. During this step, the ribosome changes from the pre-translocational (PRE) to the post-translocational (POST) state as the newly formed A-site-bound peptidyl-tRNA and P-site-bound deacylated tRNA move to the P and E sites, respectively. Catalyzes the coordinated movement of the two tRNA molecules, the mRNA and conformational changes in the ribosome. The sequence is that of Elongation factor G from Oenococcus oeni (strain ATCC BAA-331 / PSU-1).